Reading from the N-terminus, the 397-residue chain is Elongation factor Tu (397 aa).

Residues 10–206 (KPHVNIGTIG…AVDTYIPTPE (197 aa)) form the tr-type G domain. The interval 19–26 (GHVDHGKT) is G1. Residue 19-26 (GHVDHGKT) participates in GTP binding. Residue Thr-26 participates in Mg(2+) binding. Residues 60–64 (GITIN) form a G2 region. The segment at 81–84 (DCPG) is G3. GTP contacts are provided by residues 81 to 85 (DCPGH) and 136 to 139 (NKSD). A G4 region spans residues 136–139 (NKSD). The tract at residues 174-176 (SAL) is G5.

Belongs to the TRAFAC class translation factor GTPase superfamily. Classic translation factor GTPase family. EF-Tu/EF-1A subfamily. As to quaternary structure, monomer.

Its subcellular location is the cytoplasm. It catalyses the reaction GTP + H2O = GDP + phosphate + H(+). Its function is as follows. GTP hydrolase that promotes the GTP-dependent binding of aminoacyl-tRNA to the A-site of ribosomes during protein biosynthesis. This is Elongation factor Tu from Clostridium kluyveri (strain ATCC 8527 / DSM 555 / NBRC 12016 / NCIMB 10680 / K1).